Consider the following 424-residue polypeptide: Histidine--tRNA ligase (424 aa).

It belongs to the class-II aminoacyl-tRNA synthetase family. In terms of assembly, homodimer.

The protein localises to the cytoplasm. The enzyme catalyses tRNA(His) + L-histidine + ATP = L-histidyl-tRNA(His) + AMP + diphosphate + H(+). The protein is Histidine--tRNA ligase of Bacillus licheniformis (strain ATCC 14580 / DSM 13 / JCM 2505 / CCUG 7422 / NBRC 12200 / NCIMB 9375 / NCTC 10341 / NRRL NRS-1264 / Gibson 46).